The following is a 354-amino-acid chain: Tryptophan--tRNA ligase (354 aa).

ATP-binding positions include 13–15 (QPT) and 21–22 (GN). The short motif at 14-22 (PTGNLHLGN) is the 'HIGH' region element. Aspartate 137 is an L-tryptophan binding site. Residues 149–151 (GDD), valine 208, and 217–221 (KMSKS) each bind ATP. A 'KMSKS' region motif is present at residues 217–221 (KMSKS).

This sequence belongs to the class-I aminoacyl-tRNA synthetase family. Homodimer.

Its subcellular location is the cytoplasm. It carries out the reaction tRNA(Trp) + L-tryptophan + ATP = L-tryptophyl-tRNA(Trp) + AMP + diphosphate + H(+). In terms of biological role, catalyzes the attachment of tryptophan to tRNA(Trp). The chain is Tryptophan--tRNA ligase from Rhizobium meliloti (strain 1021) (Ensifer meliloti).